We begin with the raw amino-acid sequence, 523 residues long: Pituitary adenylate cyclase-activating polypeptide type I receptor (523 aa).

A signal peptide spans 1 to 19 (MARVLQLSLTALLLPVAIA). At 20 to 151 (MHSDCIFKKE…SGDQDYYYLS (132 aa)) the chain is on the extracellular side. 3 disulfide bridges follow: cysteine 33–cysteine 62, cysteine 53–cysteine 117, and cysteine 76–cysteine 133. N-linked (GlcNAc...) asparagine glycans are attached at residues asparagine 47, asparagine 59, and asparagine 116. Positions 124 to 138 (EPFPHYFDACGFDDY) are important for ADCYAP1/PACAP ligand binding and specificity. Positions 124-138 (EPFPHYFDACGFDDY) are important for ligand binding and specificity. A helical membrane pass occupies residues 152-176 (VKALYTVGYSTSLATLTTAMVILCR). Topologically, residues 177–186 (FRKLHCTRNF) are cytoplasmic. The helical transmembrane segment at 187–207 (IHMNLFVSFMLRAISVFIKDW) threads the bilayer. Residues 208–222 (ILYAEQDSSHCFVST) lie on the Extracellular side of the membrane. Residues 223–248 (VECKAVMVFFHYCVVSNYFWLFIEGL) form a helical membrane-spanning segment. Cysteine 225 and cysteine 295 form a disulfide bridge. Residues 249–266 (YLFTLLVETFFPERRYFY) are Cytoplasmic-facing. The helical transmembrane segment at 267 to 289 (WYTIIGWGTPTVCVTVWAVLRLY) threads the bilayer. At 290 to 301 (FDDAGCWDMNDS) the chain is on the extracellular side. Residues 302–328 (TALWWVIKGPVVGSIMVNFVLFIGIII) form a helical membrane-spanning segment. The Cytoplasmic segment spans residues 329-346 (ILVQKLQSPDMGGNESSI). The helical transmembrane segment at 347–429 (YLTNLRLRVP…HYTVFAFSPE (83 aa)) threads the bilayer. Over 430–434 (NVSKR) the chain is Extracellular. A helical membrane pass occupies residues 435-458 (ERLVFELGLGSFQGFVVAVLYCFL). Topologically, residues 459-523 (NGEVQAEIKR…SSLPADNLAT (65 aa)) are cytoplasmic. 2 positions are modified to phosphoserine: serine 489 and serine 502.

Belongs to the G-protein coupled receptor 2 family. In terms of assembly, interacts with maxadilan, a vasodilator peptide from Lutzomyia longipalpis saliva; the interaction results in ADCYAP1R1 activation. Hypothalamus, anterior pituitary, adrenal medulla, testicular germ cells.

It is found in the cell membrane. G protein-coupled receptor activated by the neuropeptide pituitary adenylate cyclase-activating polypeptide (ADCYAP1/PACAP). Binds both PACAP27 and PACAP38 bioactive peptides. Ligand binding causes a conformation change that triggers signaling via guanine nucleotide-binding proteins (G proteins) and modulates the activity of downstream effectors. Activates cAMP-dependent pathway. May regulate the release of adrenocorticotropin, luteinizing hormone, growth hormone, prolactin, epinephrine, and catecholamine. May play a role in spermatogenesis and sperm motility. Causes smooth muscle relaxation and secretion in the gastrointestinal tract. In Rattus norvegicus (Rat), this protein is Pituitary adenylate cyclase-activating polypeptide type I receptor.